Reading from the N-terminus, the 169-residue chain is Probable phospholipid hydroperoxide glutathione peroxidase (169 aa).

The active site involves Cys43.

This sequence belongs to the glutathione peroxidase family. Monomer. Has a tendency to form higher mass oligomers. Interacts with FUNDC1; this interaction promotes GPX4 recruitment into mitochondria through TOM/TIM complex where it is degraded by mitophagy.

The protein localises to the cytoplasm. It carries out the reaction a hydroperoxy polyunsaturated fatty acid + 2 glutathione = a hydroxy polyunsaturated fatty acid + glutathione disulfide + H2O. Functionally, protects cells and enzymes from oxidative damage, by catalyzing the reduction of hydrogen peroxide, lipid peroxides and organic hydroperoxide, by glutathione. The protein is Probable phospholipid hydroperoxide glutathione peroxidase (GPXle-1) of Solanum lycopersicum (Tomato).